A 102-amino-acid polypeptide reads, in one-letter code: Urease subunit beta (102 aa).

The protein belongs to the urease beta subunit family. As to quaternary structure, heterotrimer of UreA (gamma), UreB (beta) and UreC (alpha) subunits. Three heterotrimers associate to form the active enzyme.

Its subcellular location is the cytoplasm. It catalyses the reaction urea + 2 H2O + H(+) = hydrogencarbonate + 2 NH4(+). It functions in the pathway nitrogen metabolism; urea degradation; CO(2) and NH(3) from urea (urease route): step 1/1. This chain is Urease subunit beta, found in Alteromonas mediterranea (strain DSM 17117 / CIP 110805 / LMG 28347 / Deep ecotype).